Reading from the N-terminus, the 203-residue chain is Pyridoxal 5'-phosphate synthase subunit PdxT (203 aa).

52–54 (GES) contributes to the L-glutamine binding site. Cys-84 (nucleophile) is an active-site residue. L-glutamine is bound by residues Arg-116 and 144–145 (IR). Residues His-184 and Glu-186 each act as charge relay system in the active site.

This sequence belongs to the glutaminase PdxT/SNO family. In the presence of PdxS, forms a dodecamer of heterodimers. Only shows activity in the heterodimer.

The catalysed reaction is aldehydo-D-ribose 5-phosphate + D-glyceraldehyde 3-phosphate + L-glutamine = pyridoxal 5'-phosphate + L-glutamate + phosphate + 3 H2O + H(+). The enzyme catalyses L-glutamine + H2O = L-glutamate + NH4(+). It functions in the pathway cofactor biosynthesis; pyridoxal 5'-phosphate biosynthesis. Functionally, catalyzes the hydrolysis of glutamine to glutamate and ammonia as part of the biosynthesis of pyridoxal 5'-phosphate. The resulting ammonia molecule is channeled to the active site of PdxS. The sequence is that of Pyridoxal 5'-phosphate synthase subunit PdxT from Aeropyrum pernix (strain ATCC 700893 / DSM 11879 / JCM 9820 / NBRC 100138 / K1).